Here is a 587-residue protein sequence, read N- to C-terminus: Cryptochrome-1 (587 aa).

The Photolyase/cryptochrome alpha/beta domain occupies 3–132 (VNAVHWFRKG…EVIVRISHTL (130 aa)). Lysine 11 is covalently cross-linked (Glycyl lysine isopeptide (Lys-Gly) (interchain with G-Cter in ubiquitin)). The LIR 1 motif lies at 50 to 54 (NRWRF). Serine 71 is modified (phosphoserine; by AMPK). The LIR 2 signature appears at 82-87 (DVFPRL). Lysine 107 participates in a covalent cross-link: Glycyl lysine isopeptide (Lys-Gly) (interchain with G-Cter in ubiquitin). Positions 151 to 156 (KRFQTL) match the LIR 3 motif. Residue lysine 159 forms a Glycyl lysine isopeptide (Lys-Gly) (interchain with G-Cter in ubiquitin) linkage. Position 247 is a phosphoserine; by MAPK (serine 247). Serine 252 contacts FAD. Short sequence motifs (LIR) lie at residues 255–260 (LRFGCL) and 271–276 (DLYKKV). Phosphoserine; by AMPK is present on serine 280. The LIR 6 motif lies at 285–290 (SLYGQL). An FAD-binding site is contributed by glutamine 289. Lysine 329 is covalently cross-linked (Glycyl lysine isopeptide (Lys-Gly) (interchain with G-Cter in ubiquitin)). Positions 335–339 (TGFPW) match the LIR 7 motif. Residue histidine 355 participates in FAD binding. The tract at residues 371-470 (WISWEEGMKV…LIGVNYPKPM (100 aa)) is required for inhibition of CLOCK-BMAL1-mediated transcription. Positions 379 to 384 (KVFEEL) match the LIR 8 motif. Position 387–389 (387–389 (DAD)) interacts with FAD. 3 consecutive short sequence motifs (LIR) follow at residues 395-400 (GSWMWL), 411-416 (HCYCPV), and 430-435 (RRYLPV). The interaction with TIMELESS stretch occupies residues 471-493 (VNHAEASRLNIERMKQIYQQLSR). Lysine 485 participates in a covalent cross-link: Glycyl lysine isopeptide (Lys-Gly) (interchain with G-Cter in ubiquitin). 2 consecutive short sequence motifs (LIR) follow at residues 486–491 (QIYQQL) and 492–497 (SRYRGL). Residues 554 to 587 (GSSSMGHGLSNGKRPSQEEDTQSIGPKVQRQSTN) are disordered. Serine 569 carries the post-translational modification Phosphoserine.

It belongs to the DNA photolyase class-1 family. In terms of assembly, component of the circadian core oscillator, which includes the CRY proteins, CLOCK or NPAS2, BMAL1 or BMAL2, CSNK1D and/or CSNK1E, TIMELESS, and the PER proteins. Interacts directly with TIMELESS. Interacts directly with PER1, PER2 and PER3; interaction with PER2 inhibits its ubiquitination and vice versa. Interacts with FBXL21. Interacts with FBXL3. Interacts with CLOCK-BMAL1 independently of PER2 and DNA. Interacts with HDAC1, HDAC2 and SIN3B. Interacts with nuclear receptors AR, NR1D1, NR3C1/GR, RORA and RORC; the interaction with at least NR3C1/GR is ligand dependent. Interacts with PRKDC. Interacts with the G protein subunit alpha GNAS; the interaction may block GPCR-mediated regulation of cAMP concentrations. Interacts with PRMT5. Interacts with EZH2. Interacts with MYBBP1A, DOCK7, HNRNPU, RPL7A, RPL8 and RPS3. Interacts with PPP5C (via TPR repeats). Interacts with MAP1LC3B. Interacts with CLOCK. Interacts with BMAL1. Interacts weakly with HDAC3; this interaction is enhanced in the presence of FBXL3. Interacts with TRIM28, KCTD5 and DDB1 Interacts with HNF4A. Interacts with PSMD2 in a KDM8-dependent manner. Interacts with KDM8 in a FBXL3-dependent manner. Interacts with PPARG in a ligand-dependent manner. Interacts with PPARD (via domain NR LBD) and NR1I2 (via domain NR LBD) in a ligand-dependent manner. Interacts with PPARA, NR1I3 and VDR. It depends on FAD as a cofactor. The cofactor is (6R)-5,10-methylene-5,6,7,8-tetrahydrofolate. Post-translationally, phosphorylation on Ser-247 by MAPK is important for the inhibition of CLOCK-BMAL1-mediated transcriptional activity. Phosphorylation by CSNK1E requires interaction with PER1 or PER2. Phosphorylation at Ser-71 and Ser-280 by AMPK decreases protein stability. Phosphorylation at Ser-569 exhibits a robust circadian rhythm with a peak at CT8, increases protein stability, prevents SCF(FBXL3)-mediated degradation and is antagonized by interaction with PRKDC. Ubiquitinated by the SCF(FBXL3) and SCF(FBXL21) complexes, regulating the balance between degradation and stabilization. The SCF(FBXL3) complex is mainly nuclear and mediates ubiquitination and subsequent degradation of CRY1. In contrast, cytoplasmic SCF(FBXL21) complex-mediated ubiquitination leads to stabilize CRY1 and counteract the activity of the SCF(FBXL3) complex. The SCF(FBXL3) and SCF(FBXL21) complexes probably mediate ubiquitination at different Lys residues. Ubiquitination at Lys-11 and Lys-107 are specifically ubiquitinated by the SCF(FBXL21) complex but not by the SCF(FBXL3) complex. Ubiquitination may be inhibited by PER2. Deubiquitinated by USP7. In terms of processing, undergoes autophagy-mediated degradation in the liver in a time-dependent manner. Autophagic degradation of CRY1 (an inhibitor of gluconeogenesis) occurs during periods of reduced feeding allowing induction of gluconeogenesis and maintenance of blood glucose levels. Expressed in all tissues tested including spleen, liver, skeletal muscle, kidney, brain, intestine, eye, harderian gland, liver and heart. Highest levels in the eye, brain, kidney and harderian gland. In the brain, especially located to the suprachiasma nucleus (SCN).

It is found in the cytoplasm. Its subcellular location is the nucleus. Its function is as follows. Transcriptional repressor which forms a core component of the circadian clock. The circadian clock, an internal time-keeping system, regulates various physiological processes through the generation of approximately 24 hour circadian rhythms in gene expression, which are translated into rhythms in metabolism and behavior. It is derived from the Latin roots 'circa' (about) and 'diem' (day) and acts as an important regulator of a wide array of physiological functions including metabolism, sleep, body temperature, blood pressure, endocrine, immune, cardiovascular, and renal function. Consists of two major components: the central clock, residing in the suprachiasmatic nucleus (SCN) of the brain, and the peripheral clocks that are present in nearly every tissue and organ system. Both the central and peripheral clocks can be reset by environmental cues, also known as Zeitgebers (German for 'timegivers'). The predominant Zeitgeber for the central clock is light, which is sensed by retina and signals directly to the SCN. The central clock entrains the peripheral clocks through neuronal and hormonal signals, body temperature and feeding-related cues, aligning all clocks with the external light/dark cycle. Circadian rhythms allow an organism to achieve temporal homeostasis with its environment at the molecular level by regulating gene expression to create a peak of protein expression once every 24 hours to control when a particular physiological process is most active with respect to the solar day. Transcription and translation of core clock components (CLOCK, NPAS2, BMAL1, BMAL2, PER1, PER2, PER3, CRY1 and CRY2) plays a critical role in rhythm generation, whereas delays imposed by post-translational modifications (PTMs) are important for determining the period (tau) of the rhythms (tau refers to the period of a rhythm and is the length, in time, of one complete cycle). A diurnal rhythm is synchronized with the day/night cycle, while the ultradian and infradian rhythms have a period shorter and longer than 24 hours, respectively. Disruptions in the circadian rhythms contribute to the pathology of cardiovascular diseases, cancer, metabolic syndromes and aging. A transcription/translation feedback loop (TTFL) forms the core of the molecular circadian clock mechanism. Transcription factors, CLOCK or NPAS2 and BMAL1 or BMAL2, form the positive limb of the feedback loop, act in the form of a heterodimer and activate the transcription of core clock genes and clock-controlled genes (involved in key metabolic processes), harboring E-box elements (5'-CACGTG-3') within their promoters. The core clock genes: PER1/2/3 and CRY1/2 which are transcriptional repressors form the negative limb of the feedback loop and interact with the CLOCK|NPAS2-BMAL1|BMAL2 heterodimer inhibiting its activity and thereby negatively regulating their own expression. This heterodimer also activates nuclear receptors NR1D1/2 and RORA/B/G, which form a second feedback loop and which activate and repress BMAL1 transcription, respectively. CRY1 and CRY2 have redundant functions but also differential and selective contributions at least in defining the pace of the SCN circadian clock and its circadian transcriptional outputs. More potent transcriptional repressor in cerebellum and liver than CRY2, though more effective in lengthening the period of the SCN oscillator. On its side, CRY2 seems to play a critical role in tuning SCN circadian period by opposing the action of CRY1. With CRY2, is dispensable for circadian rhythm generation but necessary for the development of intercellular networks for rhythm synchrony. Capable of translocating circadian clock core proteins such as PER proteins to the nucleus. Interacts with CLOCK-BMAL1 independently of PER proteins and is found at CLOCK-BMAL1-bound sites, suggesting that CRY may act as a molecular gatekeeper to maintain CLOCK-BMAL1 in a poised and repressed state until the proper time for transcriptional activation. Represses the CLOCK-BMAL1 induced transcription of BHLHE40/DEC1, ATF4, MTA1, KLF10 and NAMPT. May repress circadian target genes expression in collaboration with HDAC1 and HDAC2 through histone deacetylation. Mediates the clock-control activation of ATR and modulates ATR-mediated DNA damage checkpoint. In liver, mediates circadian regulation of cAMP signaling and gluconeogenesis by binding to membrane-coupled G proteins and blocking glucagon-mediated increases in intracellular cAMP concentrations and CREB1 phosphorylation. Inhibits hepatic gluconeogenesis by decreasing nuclear FOXO1 levels that down-regulates gluconeogenic gene expression. Besides its role in the maintenance of the circadian clock, is also involved in the regulation of other processes. Represses glucocorticoid receptor NR3C1/GR-induced transcriptional activity by binding to glucocorticoid response elements (GREs). Plays a key role in glucose and lipid metabolism modulation, in part, through the transcriptional regulation of genes involved in these pathways, such as LEP or ACSL4. Represses PPARD and its target genes in the skeletal muscle and limits exercise capacity. Plays an essential role in the generation of circadian rhythms in the retina. Represses the transcriptional activity of NR1I2. In Spalax judaei (Judean Mountains blind mole rat), this protein is Cryptochrome-1 (CRY1).